We begin with the raw amino-acid sequence, 341 residues long: Ribosomal RNA small subunit methyltransferase C (341 aa).

This sequence belongs to the methyltransferase superfamily. RsmC family. In terms of assembly, monomer.

The protein localises to the cytoplasm. The catalysed reaction is guanosine(1207) in 16S rRNA + S-adenosyl-L-methionine = N(2)-methylguanosine(1207) in 16S rRNA + S-adenosyl-L-homocysteine + H(+). Specifically methylates the guanine in position 1207 of 16S rRNA in the 30S particle. In Pseudoalteromonas translucida (strain TAC 125), this protein is Ribosomal RNA small subunit methyltransferase C.